We begin with the raw amino-acid sequence, 429 residues long: Trigger factor (429 aa).

Residues 164 to 249 form the PPIase FKBP-type domain; sequence GDWAVIDHEG…LKALKVRQAP (86 aa).

It belongs to the FKBP-type PPIase family. Tig subfamily.

The protein resides in the cytoplasm. It catalyses the reaction [protein]-peptidylproline (omega=180) = [protein]-peptidylproline (omega=0). Involved in protein export. Acts as a chaperone by maintaining the newly synthesized protein in an open conformation. Functions as a peptidyl-prolyl cis-trans isomerase. The polypeptide is Trigger factor (Anaeromyxobacter dehalogenans (strain 2CP-C)).